Reading from the N-terminus, the 429-residue chain is Histidine--tRNA ligase (429 aa).

It belongs to the class-II aminoacyl-tRNA synthetase family. Homodimer.

The protein resides in the cytoplasm. The enzyme catalyses tRNA(His) + L-histidine + ATP = L-histidyl-tRNA(His) + AMP + diphosphate + H(+). The chain is Histidine--tRNA ligase from Pseudomonas fluorescens (strain Pf0-1).